We begin with the raw amino-acid sequence, 215 residues long: Octanoyltransferase (215 aa).

In terms of domain architecture, BPL/LPL catalytic spans 35 to 210; it reads PDTPDQLWVV…HCLEAIVEYG (176 aa). Residues 74–81, 141–143, and 154–156 contribute to the substrate site; these read RGGQVTYH, SVG, and GLA. The Acyl-thioester intermediate role is filled by C172.

The protein belongs to the LipB family.

The protein resides in the cytoplasm. The enzyme catalyses octanoyl-[ACP] + L-lysyl-[protein] = N(6)-octanoyl-L-lysyl-[protein] + holo-[ACP] + H(+). It participates in protein modification; protein lipoylation via endogenous pathway; protein N(6)-(lipoyl)lysine from octanoyl-[acyl-carrier-protein]: step 1/2. Catalyzes the transfer of endogenously produced octanoic acid from octanoyl-acyl-carrier-protein onto the lipoyl domains of lipoate-dependent enzymes. Lipoyl-ACP can also act as a substrate although octanoyl-ACP is likely to be the physiological substrate. The chain is Octanoyltransferase from Alkalilimnicola ehrlichii (strain ATCC BAA-1101 / DSM 17681 / MLHE-1).